The sequence spans 586 residues: Arginine--tRNA ligase (586 aa).

Residues 133 to 143 (ANPTGPLNIVS) carry the 'HIGH' region motif.

Belongs to the class-I aminoacyl-tRNA synthetase family. As to quaternary structure, monomer.

The protein localises to the cytoplasm. The enzyme catalyses tRNA(Arg) + L-arginine + ATP = L-arginyl-tRNA(Arg) + AMP + diphosphate. The protein is Arginine--tRNA ligase of Leptospira interrogans serogroup Icterohaemorrhagiae serovar Lai (strain 56601).